Consider the following 597-residue polypeptide: DNA import protein CedB (597 aa).

Residues 10-30 (VVLLILGIISFNLVFIILAII) form a helical membrane-spanning segment. 286 to 293 (GPTGSGKT) lines the ATP pocket.

The protein localises to the cell membrane. Its function is as follows. Part of the Ced system, which is involved in DNA import. This chain is DNA import protein CedB, found in Sulfolobus acidocaldarius (strain ATCC 33909 / DSM 639 / JCM 8929 / NBRC 15157 / NCIMB 11770).